We begin with the raw amino-acid sequence, 83 residues long: DNA-directed RNA polymerase subunit omega (83 aa).

Belongs to the RNA polymerase subunit omega family. In terms of assembly, the RNAP catalytic core consists of 2 alpha, 1 beta, 1 beta' and 1 omega subunit. When a sigma factor is associated with the core the holoenzyme is formed, which can initiate transcription.

It catalyses the reaction RNA(n) + a ribonucleoside 5'-triphosphate = RNA(n+1) + diphosphate. Its function is as follows. Promotes RNA polymerase assembly. Latches the N- and C-terminal regions of the beta' subunit thereby facilitating its interaction with the beta and alpha subunits. The polypeptide is DNA-directed RNA polymerase subunit omega (Chromohalobacter salexigens (strain ATCC BAA-138 / DSM 3043 / CIP 106854 / NCIMB 13768 / 1H11)).